Reading from the N-terminus, the 82-residue chain is Pigment-dispersing hormone peptides (82 aa).

The signal sequence occupies residues 1–26 (MIGKYLSWFMLAFLFGFVLESYRVQS). An Alanine amide modification is found at alanine 80.

Belongs to the arthropod PDH family. In terms of tissue distribution, expressed strongly in the head and weakly in the ventral nerve cord. Not detected in the midgut cecum or hindgut. In the cephalic neural complex, specifically localized to cells within the optic lobe, anteromedian protocerebrum, accessory lobe, tritocerebrum, and subesophageal ganglion.

It is found in the secreted. Its function is as follows. The pigment-dispersing hormone causes the migration of the distal retinal pigment into the proximal end of the pigment chromatophore cells and thus decreases the amount of light entering the retinulas. May also function as a neurotransmitter and/or neuromodulator. The protein is Pigment-dispersing hormone peptides of Armadillidium vulgare (Pillbug).